A 509-amino-acid polypeptide reads, in one-letter code: Dihydrolipoyl dehydrogenase, mitochondrial (509 aa).

The N-terminal 35 residues, 1–35 (MQSWSRVYCTLAKRGHFNRIAHGLQGVSAVPLRTY), are a transit peptide targeting the mitochondrion. An N6-acetyllysine; alternate modification is found at lysine 66. N6-succinyllysine; alternate is present on lysine 66. FAD contacts are provided by residues 71–80 (EKNETLGGTC) and lysine 89. Cysteine 80 and cysteine 85 are joined by a disulfide. N6-acetyllysine; alternate is present on residues lysine 104, lysine 122, lysine 132, and lysine 143. Lysine 104, lysine 122, lysine 132, and lysine 143 each carry N6-succinyllysine; alternate. Glycine 154 provides a ligand contact to FAD. 2 positions are modified to N6-succinyllysine: lysine 159 and lysine 166. Residue 183-185 (TGS) participates in FAD binding. NAD(+) is bound by residues 220-227 (GAGVIGVE) and glutamate 243. 2 positions are modified to N6-succinyllysine: lysine 273 and lysine 277. Valine 278 serves as a coordination point for NAD(+). Residues serine 285 and serine 297 each carry the phosphoserine modification. Glycine 314 contributes to the NAD(+) binding site. Lysine 346 carries the post-translational modification N6-acetyllysine. FAD-binding positions include aspartate 355 and 361–364 (MLAH). Lysine 410 is subject to N6-acetyllysine; alternate. Position 410 is an N6-succinyllysine; alternate (lysine 410). An N6-acetyllysine mark is found at lysine 417 and lysine 420. Lysine 430 bears the N6-succinyllysine mark. Catalysis depends on histidine 487, which acts as the Proton acceptor. The residue at position 502 (serine 502) is a Phosphoserine. Position 505 is an N6-acetyllysine; alternate (lysine 505). Lysine 505 carries the N6-succinyllysine; alternate modification.

It belongs to the class-I pyridine nucleotide-disulfide oxidoreductase family. Homodimer. Part of the multimeric pyruvate dehydrogenase complex that contains multiple copies of pyruvate dehydrogenase (subunits PDHA (PDHA1 or PDHA2) and PDHB, E1), dihydrolipoamide acetyltransferase (DLAT, E2) and lipoamide dehydrogenase (DLD, E3). These subunits are bound to an inner core composed of about 48 DLAT and 12 PDHX molecules (by non covalent bonds). The 2-oxoglutarate dehydrogenase complex is composed of OGDH (2-oxoglutarate dehydrogenase; E1), DLST (dihydrolipoamide succinyltransferase; E2), DLD (dihydrolipoamide dehydrogenase; E3) and the assembly factor KGD4. It contains multiple copies of the three enzymatic components (E1, E2 and E3). In the nucleus, the 2-oxoglutarate dehydrogenase complex associates with KAT2A. Interacts with PDHX. The cofactor is FAD. In terms of processing, tyrosine phosphorylated. In terms of tissue distribution, expressed in heart (at protein level).

It is found in the mitochondrion matrix. It localises to the nucleus. The protein resides in the cell projection. Its subcellular location is the cilium. The protein localises to the flagellum. It is found in the cytoplasmic vesicle. It localises to the secretory vesicle. The protein resides in the acrosome. The enzyme catalyses N(6)-[(R)-dihydrolipoyl]-L-lysyl-[protein] + NAD(+) = N(6)-[(R)-lipoyl]-L-lysyl-[protein] + NADH + H(+). Its function is as follows. Lipoamide dehydrogenase is a component of the glycine cleavage system as well as an E3 component of three alpha-ketoacid dehydrogenase complexes (pyruvate-, alpha-ketoglutarate-, and branched-chain amino acid-dehydrogenase complex). The 2-oxoglutarate dehydrogenase complex is mainly active in the mitochondrion. A fraction of the 2-oxoglutarate dehydrogenase complex also localizes in the nucleus and is required for lysine succinylation of histones: associates with KAT2A on chromatin and provides succinyl-CoA to histone succinyltransferase KAT2A. In monomeric form may have additional moonlighting function as serine protease. Involved in the hyperactivation of spermatazoa during capacitation and in the spermatazoal acrosome reaction. This is Dihydrolipoyl dehydrogenase, mitochondrial (DLD) from Sus scrofa (Pig).